The sequence spans 112 residues: Putative pterin-4-alpha-carbinolamine dehydratase (112 aa).

The protein belongs to the pterin-4-alpha-carbinolamine dehydratase family.

It catalyses the reaction (4aS,6R)-4a-hydroxy-L-erythro-5,6,7,8-tetrahydrobiopterin = (6R)-L-erythro-6,7-dihydrobiopterin + H2O. This is Putative pterin-4-alpha-carbinolamine dehydratase from Shewanella sp. (strain ANA-3).